Reading from the N-terminus, the 141-residue chain is MATIKVDVVSAEEQIFSGQAKFVALPGEAGELGILPGHTPLITRIRPGAVRIEAENGEEEFVFVAGGILEVQPGAVTVLADTAIRGKDLDEAKAEDARKRAEEALQNTGSNLEYATAQAELAYATAQLAAIQRLRKLRGQH.

This sequence belongs to the ATPase epsilon chain family. As to quaternary structure, F-type ATPases have 2 components, CF(1) - the catalytic core - and CF(0) - the membrane proton channel. CF(1) has five subunits: alpha(3), beta(3), gamma(1), delta(1), epsilon(1). CF(0) has three main subunits: a, b and c.

The protein resides in the cell inner membrane. Its function is as follows. Produces ATP from ADP in the presence of a proton gradient across the membrane. This chain is ATP synthase epsilon chain 1, found in Paraburkholderia xenovorans (strain LB400).